The sequence spans 398 residues: G2/mitotic-specific cyclin-B2 (398 aa).

Thr8 is subject to Phosphothreonine. A phosphoserine mark is found at Ser11, Ser77, and Ser92. A Phosphothreonine modification is found at Thr94. Ser99, Ser392, and Ser398 each carry phosphoserine.

The protein belongs to the cyclin family. Cyclin AB subfamily. Interacts with the CDK1 protein kinase to form a serine/threonine kinase holoenzyme complex also known as maturation promoting factor (MPF). The cyclin subunit imparts substrate specificity to the complex.

Its function is as follows. Essential for the control of the cell cycle at the G2/M (mitosis) transition. The protein is G2/mitotic-specific cyclin-B2 (CCNB2) of Homo sapiens (Human).